A 299-amino-acid chain; its full sequence is GTPase Era (299 aa).

In terms of domain architecture, Era-type G spans 4 to 171; the sequence is KSGFVAILGR…VDILSENLDE (168 aa). The segment at 12–19 is G1; the sequence is GRPNVGKS. 12–19 is a binding site for GTP; that stretch reads GRPNVGKS. The interval 38–42 is G2; sequence QTTRN. The G3 stretch occupies residues 59 to 62; the sequence is DTPG. Residues 59–63 and 121–124 each bind GTP; these read DTPGI and NKID. The G4 stretch occupies residues 121–124; it reads NKID. A G5 region spans residues 150 to 152; the sequence is ISA. The region spanning 202–280 is the KH type-2 domain; sequence TREEIPHSVA…FLETWVKVKK (79 aa).

Belongs to the TRAFAC class TrmE-Era-EngA-EngB-Septin-like GTPase superfamily. Era GTPase family. As to quaternary structure, monomer.

It localises to the cytoplasm. It is found in the cell membrane. An essential GTPase that binds both GDP and GTP, with rapid nucleotide exchange. Plays a role in 16S rRNA processing and 30S ribosomal subunit biogenesis and possibly also in cell cycle regulation and energy metabolism. The sequence is that of GTPase Era from Streptococcus pneumoniae (strain P1031).